The following is a 153-amino-acid chain: Mediator of RNA polymerase II transcription subunit 22 (153 aa).

It belongs to the Mediator complex subunit 22 family. Component of the Mediator complex.

It is found in the nucleus. Functionally, component of the Mediator complex, a coactivator involved in the regulated transcription of nearly all RNA polymerase II-dependent genes. Mediator functions as a bridge to convey information from gene-specific regulatory proteins to the basal RNA polymerase II transcription machinery. Mediator is recruited to promoters by direct interactions with regulatory proteins and serves as a scaffold for the assembly of a functional preinitiation complex with RNA polymerase II and the general transcription factors. This is Mediator of RNA polymerase II transcription subunit 22 (mdt-22) from Caenorhabditis briggsae.